A 1896-amino-acid chain; its full sequence is Obscurin-like protein 1 (1896 aa).

Position 10 is a phosphoserine (Ser10). The 89-residue stretch at 12–100 (PCFLRFPRPV…GEAYAAAAVT (89 aa)) folds into the Ig-like 1 domain. The interaction with TTN stretch occupies residues 17-19 (FPR). An intrachain disulfide couples Cys33 to Cys84. Residues 85–94 (RARNAAGEAY) are interaction with TTN. Residues 106–127 (ASDPELQPAERPLPSPGSGEGA) form a disordered region. Ig-like domains follow at residues 128–225 (PVFL…ALLQ), 243–330 (PVVE…QTLS), and 339–425 (PRLR…ANVT). 3 cysteine pairs are disulfide-bonded: Cys149-Cys209, Cys267-Cys319, and Cys362-Cys412. A Fibronectin type-III domain is found at 517 to 615 (PPGPPILAEM…FHGSAHLVPT (99 aa)). Ig-like domains follow at residues 714–800 (PVHI…FGVT), 804–893 (PPVH…VTIT), 902–982 (PSGK…FTVT), 986–1075 (PPVR…VTVT), 1078–1172 (PERI…PPVQ), 1174–1261 (LALE…FTVQ), 1265–1357 (PPVR…VEEP), 1357–1534 (PLLV…ARLS), 1628–1720 (PVTI…RTVA), and 1794–1896 (PAQS…VEGN). 6 disulfides stabilise this stretch: Cys738/Cys788, Cys829/Cys879, Cys920/Cys970, Cys1011/Cys1061, Cys1103/Cys1153, and Cys1195/Cys1245. Intrachain disulfides connect Cys1381/Cys1522 and Cys1650/Cys1700.

Component of the 3M complex, composed of core components CUL7, CCDC8 and OBSL1. Interacts with CCDC8. Interacts with CUL7; the interaction is direct. Interacts with FBXW8. Interacts (via N-terminal Ig-like domain) with TTN/titin (via C-terminal Ig-like domain); the interaction is direct. In terms of tissue distribution, widely expressed, with predominant levels found in the heart.

Its subcellular location is the cytoplasm. It is found in the cytoskeleton. The protein localises to the microtubule organizing center. The protein resides in the centrosome. It localises to the perinuclear region. Its subcellular location is the golgi apparatus. In terms of biological role, core component of the 3M complex, a complex required to regulate microtubule dynamics and genome integrity. It is unclear how the 3M complex regulates microtubules, it could act by controlling the level of a microtubule stabilizer. Acts as a regulator of the Cul7-RING(FBXW8) ubiquitin-protein ligase, playing a critical role in the ubiquitin ligase pathway that regulates Golgi morphogenesis and dendrite patterning in brain. Required to localize CUL7 to the Golgi apparatus in neurons. The polypeptide is Obscurin-like protein 1 (Homo sapiens (Human)).